We begin with the raw amino-acid sequence, 71 residues long: Serine palmitoyltransferase small subunit A (71 aa).

Residues 1–12 (MAGMALARAWKQ) are Cytoplasmic-facing. Residues 13-29 (MSWFYYQYLLVTALYML) traverse the membrane as a helical segment. Residues 30–34 (EPWER) are Lumenal-facing. A helical transmembrane segment spans residues 35–57 (TVFNSMLVSIVGMALYTGYVFMP). Over 58-71 (QHIMAILHYFEIVQ) the chain is Cytoplasmic.

The protein belongs to the SPTSS family. SPTSSA subfamily. In terms of assembly, component of the serine palmitoyltransferase (SPT) complex, which is composed of SPTLC1, SPTLC2 or SPTLC3 and SPTSSA or SPTSSB. The heterodimer consisting of SPTLC1 and SPTLC2/SPTLC3 forms the catalytic core of the enzyme, while SPTSSA or SPTSSB subunits determine substrate specificity. SPT also interacts with ORMDL proteins, especially ORMDL3, which negatively regulate SPT activity in the presence of ceramides. Interacts with MBOAT7; the interaction plays a role in MBOAT7 localization to mitochondria-associated membranes.

The protein resides in the endoplasmic reticulum membrane. The protein operates within lipid metabolism; sphingolipid metabolism. In terms of biological role, component of the serine palmitoyltransferase multisubunit enzyme (SPT) that catalyzes the initial and rate-limiting step in sphingolipid biosynthesis by condensing L-serine and activated acyl-CoA (most commonly palmitoyl-CoA) to form long-chain bases. The SPT complex is composed of SPTLC1, SPTLC2 or SPTLC3 and SPTSSA or SPTSSB. Within this complex, the heterodimer consisting of SPTLC1 and SPTLC2/SPTLC3 forms the catalytic core. Within the SPT complex, SPTSSA stimulates the catalytic activity and plays a role in substrate specificity, which depends upon the overall complex composition. The SPTLC1-SPTLC2-SPTSSA complex shows a strong preference for C16-CoA substrate, while the SPTLC1-SPTLC3-SPTSSA isozyme uses both C14-CoA and C16-CoA as substrates, with a slight preference for C14-CoA. Independently of its action as a SPT component, may be involved in MBOAT7 localization to mitochondria-associated membranes, a membrane bridge between the endoplasmic reticulum and mitochondria, may hence affect MBOAT7-catalyzed incorporation of arachidonic acid into phosphatidylinositol. In Homo sapiens (Human), this protein is Serine palmitoyltransferase small subunit A.